Here is a 906-residue protein sequence, read N- to C-terminus: Probable helicase HelY (906 aa).

A Helicase ATP-binding domain is found at 26-184 (CSALERGHGV…WIQTVRGDTT (159 aa)). Position 39-46 (39-46 (APTGAGKT)) interacts with ATP. Positions 132–135 (DEVH) match the DEVH box motif. Positions 259-463 (GRPEVIAKLD…SYNMTINLVH (205 aa)) constitute a Helicase C-terminal domain.

The protein belongs to the helicase family. SKI2 subfamily.

This chain is Probable helicase HelY (helY), found in Mycobacterium tuberculosis (strain CDC 1551 / Oshkosh).